The following is a 521-amino-acid chain: NADH-quinone oxidoreductase subunit N (521 aa).

A run of 14 helical transmembrane segments spans residues 15–35, 43–63, 98–118, 128–148, 150–170, 185–205, 227–247, 261–281, 303–323, 331–351, 363–383, 406–426, 442–462, and 485–505; these read LAPE…DLIL, IIGW…IWRM, LLKI…LGST, AEFY…ASSG, LVTL…LVGL, VVTG…LYGV, ALVY…IAAA, PTPV…AAVF, VFFA…VSAL, LLAL…AISV, VFYL…VTVI, AAAM…AGFF, WLVA…FGII, and TVIW…GPLM.

Belongs to the complex I subunit 2 family. As to quaternary structure, NDH-1 is composed of 14 different subunits. Subunits NuoA, H, J, K, L, M, N constitute the membrane sector of the complex.

The protein resides in the cell membrane. It carries out the reaction a quinone + NADH + 5 H(+)(in) = a quinol + NAD(+) + 4 H(+)(out). In terms of biological role, NDH-1 shuttles electrons from NADH, via FMN and iron-sulfur (Fe-S) centers, to quinones in the respiratory chain. The immediate electron acceptor for the enzyme in this species is believed to be a menaquinone. Couples the redox reaction to proton translocation (for every two electrons transferred, four hydrogen ions are translocated across the cytoplasmic membrane), and thus conserves the redox energy in a proton gradient. The chain is NADH-quinone oxidoreductase subunit N from Paenibacillus sp. (strain JDR-2).